The primary structure comprises 520 residues: Bifunctional dihydrofolate reductase-thymidylate synthase (520 aa).

The DHFR domain maps to 26–229 (AFSIVVALDK…LEFEICKYVP (204 aa)). A substrate-binding site is contributed by valine 30. NADP(+) contacts are provided by residues alanine 32 and 38 to 44 (GIGDGES). A substrate-binding site is contributed by aspartate 52. NADP(+)-binding positions include 81-83 (RKT), 102-105 (LSSK), and 157-164 (GGAQVYAD). Substrate-binding residues include tyrosine 162 and threonine 180. The interval 234-520 (ERQYLELIDR…HPPIKMEMAV (287 aa)) is thymidylate synthase. Arginine 254 is a dUMP binding site. The active site involves cysteine 400. DUMP is bound by residues histidine 401, 421 to 425 (QRSCD), asparagine 433, and 463 to 465 (HVY).

The protein in the N-terminal section; belongs to the dihydrofolate reductase family. In the C-terminal section; belongs to the thymidylate synthase family.

The catalysed reaction is (6S)-5,6,7,8-tetrahydrofolate + NADP(+) = 7,8-dihydrofolate + NADPH + H(+). The enzyme catalyses dUMP + (6R)-5,10-methylene-5,6,7,8-tetrahydrofolate = 7,8-dihydrofolate + dTMP. The protein operates within cofactor biosynthesis; tetrahydrofolate biosynthesis; 5,6,7,8-tetrahydrofolate from 7,8-dihydrofolate: step 1/1. Its function is as follows. Bifunctional enzyme. Involved in de novo dTMP biosynthesis. Key enzyme in folate metabolism. Catalyzes an essential reaction for de novo glycine and purine synthesis, DNA precursor synthesis, and for the conversion of dUMP to dTMP. The sequence is that of Bifunctional dihydrofolate reductase-thymidylate synthase from Leishmania amazonensis.